We begin with the raw amino-acid sequence, 393 residues long: S-adenosylmethionine synthase (393 aa).

H17 serves as a coordination point for ATP. D19 provides a ligand contact to Mg(2+). E45 contacts K(+). Positions 58 and 106 each coordinate L-methionine. The flexible loop stretch occupies residues Q106–A116. ATP contacts are provided by residues D171–K173, K237–F238, D246, R252–K253, A269, and K273. An L-methionine-binding site is contributed by D246. An L-methionine-binding site is contributed by K277.

This sequence belongs to the AdoMet synthase family. Homotetramer; dimer of dimers. Mg(2+) is required as a cofactor. Requires K(+) as cofactor.

Its subcellular location is the cytoplasm. It catalyses the reaction L-methionine + ATP + H2O = S-adenosyl-L-methionine + phosphate + diphosphate. It functions in the pathway amino-acid biosynthesis; S-adenosyl-L-methionine biosynthesis; S-adenosyl-L-methionine from L-methionine: step 1/1. In terms of biological role, catalyzes the formation of S-adenosylmethionine (AdoMet) from methionine and ATP. The overall synthetic reaction is composed of two sequential steps, AdoMet formation and the subsequent tripolyphosphate hydrolysis which occurs prior to release of AdoMet from the enzyme. In Ruegeria sp. (strain TM1040) (Silicibacter sp.), this protein is S-adenosylmethionine synthase.